We begin with the raw amino-acid sequence, 225 residues long: UPF0758 protein Mhun_2739 (225 aa).

Positions 102-225 (RITEPDHILK…VTSLRSLGYL (124 aa)) constitute an MPN domain. Positions 174, 176, and 187 each coordinate Zn(2+). The short motif at 174–187 (HNHPSGNPEPSSED) is the JAMM motif element.

The protein belongs to the UPF0758 family.

The polypeptide is UPF0758 protein Mhun_2739 (Methanospirillum hungatei JF-1 (strain ATCC 27890 / DSM 864 / NBRC 100397 / JF-1)).